Reading from the N-terminus, the 539-residue chain is Alpha-aminoadipic semialdehyde dehydrogenase (539 aa).

The transit peptide at 1-26 (MWRVPGLLCVRVARKSKFSGSWNRPA) directs the protein to the mitochondrion. An N6-acetyllysine; alternate modification is found at lysine 94. Residue lysine 94 is modified to N6-succinyllysine; alternate. Residues 192–194 (TAF), lysine 218, 258–259 (GT), 274–275 (GS), 274–279 (GSTQVG), and 296–297 (EL) each bind NAD(+). Residue glutamate 296 is the Proton acceptor of the active site. Cysteine 330 functions as the Nucleophile in the catalytic mechanism. Position 331 (threonine 331) interacts with (S)-2-amino-6-oxohexanoate. Glutamate 427 serves as a coordination point for NAD(+). N6-acetyllysine is present on lysine 462. Positions 489 and 490 each coordinate (S)-2-amino-6-oxohexanoate. The residue at position 500 (lysine 500) is an N6-acetyllysine. Lysine 537 is subject to N6-succinyllysine.

It belongs to the aldehyde dehydrogenase family. Homotetramer.

It localises to the cytoplasm. The protein resides in the cytosol. Its subcellular location is the nucleus. The protein localises to the mitochondrion. It catalyses the reaction nonanal + NAD(+) + H2O = nonanoate + NADH + 2 H(+). The catalysed reaction is (S)-2-amino-6-oxohexanoate + NAD(+) + H2O = L-2-aminoadipate + NADH + 2 H(+). The enzyme catalyses betaine aldehyde + NAD(+) + H2O = glycine betaine + NADH + 2 H(+). It carries out the reaction an aldehyde + NAD(+) + H2O = a carboxylate + NADH + 2 H(+). It catalyses the reaction hexanal + NAD(+) + H2O = hexanoate + NADH + 2 H(+). The catalysed reaction is octanal + NAD(+) + H2O = octanoate + NADH + 2 H(+). The enzyme catalyses (E)-non-2-enal + NAD(+) + H2O = (E)-non-2-enoate + NADH + 2 H(+). It carries out the reaction (E)-4-hydroxynon-2-enal + NAD(+) + H2O = (E)-4-hydroxynon-2-enoate + NADH + 2 H(+). It participates in amine and polyamine biosynthesis; betaine biosynthesis via choline pathway; betaine from betaine aldehyde: step 1/1. In terms of biological role, multifunctional enzyme mediating important protective effects. Metabolizes betaine aldehyde to betaine, an important cellular osmolyte and methyl donor. Protects cells from oxidative stress by metabolizing a number of lipid peroxidation-derived aldehydes. Involved in lysine catabolism. This is Alpha-aminoadipic semialdehyde dehydrogenase (ALDH7A1) from Bos taurus (Bovine).